Consider the following 340-residue polypeptide: Protein pelota homolog (340 aa).

Belongs to the eukaryotic release factor 1 family. Pelota subfamily. In terms of assembly, monomer. It depends on a divalent metal cation as a cofactor.

Its subcellular location is the cytoplasm. May function in recognizing stalled ribosomes, interact with stem-loop structures in stalled mRNA molecules, and effect endonucleolytic cleavage of the mRNA. May play a role in the release non-functional ribosomes and degradation of damaged mRNAs. Has endoribonuclease activity. In Methanosphaerula palustris (strain ATCC BAA-1556 / DSM 19958 / E1-9c), this protein is Protein pelota homolog.